Consider the following 130-residue polypeptide: Small ribosomal subunit protein uS9 (130 aa).

This sequence belongs to the universal ribosomal protein uS9 family.

This Cupriavidus metallidurans (strain ATCC 43123 / DSM 2839 / NBRC 102507 / CH34) (Ralstonia metallidurans) protein is Small ribosomal subunit protein uS9.